The following is a 304-amino-acid chain: N-carbamoyl-D-amino acid hydrolase (304 aa).

The CN hydrolase domain occupies 5 to 276; that stretch reads MILAVGQQGP…DEVITAAVDL (272 aa). Residues glutamate 47, lysine 127, and cysteine 172 contribute to the active site.

The enzyme catalyses an N-carbamoyl-D-amino acid + H2O + 2 H(+) = a D-alpha-amino acid + NH4(+) + CO2. In terms of biological role, the enzyme catalyzes the hydrolysis of N-carbamoyl-D-amino acids to the corresponding which are useful intermediates in the preparation of beta-lactam antibiotics. Industrial production of beta-lactam antibiotics is now being developed using this enzyme. This chain is N-carbamoyl-D-amino acid hydrolase, found in Agrobacterium sp. (strain KNK712).